The sequence spans 252 residues: uncharacterized protein (252 aa).

A helical membrane pass occupies residues 80–100 (LSVLVIGSTMFTHAGVLPVLA).

Its subcellular location is the host membrane. The protein resides in the virion. This is an uncharacterized protein from Acanthamoeba polyphaga mimivirus (APMV).